Consider the following 1222-residue polypeptide: ATP-dependent helicase/nuclease subunit A (1222 aa).

In terms of domain architecture, UvrD-like helicase ATP-binding spans 39–495 (QKRTAQQIEA…ILLKENFRSQ (457 aa)). Residue 60–67 (ASAGSGKT) participates in ATP binding. In terms of domain architecture, UvrD-like helicase C-terminal spans 524–810 (QLIAGSHAQT…NLMTIHKSKG (287 aa)).

Belongs to the helicase family. AddA subfamily. Heterodimer of AddA and AddB/RexB. Requires Mg(2+) as cofactor.

The enzyme catalyses Couples ATP hydrolysis with the unwinding of duplex DNA by translocating in the 3'-5' direction.. It carries out the reaction ATP + H2O = ADP + phosphate + H(+). Its function is as follows. The heterodimer acts as both an ATP-dependent DNA helicase and an ATP-dependent, dual-direction single-stranded exonuclease. Recognizes the chi site generating a DNA molecule suitable for the initiation of homologous recombination. The AddA nuclease domain is required for chi fragment generation; this subunit has the helicase and 3' -&gt; 5' nuclease activities. In Streptococcus pyogenes serotype M3 (strain ATCC BAA-595 / MGAS315), this protein is ATP-dependent helicase/nuclease subunit A.